The sequence spans 250 residues: Cellulose biosynthesis protein BcsQ (250 aa).

Residue 9–16 (VRGGVGTT) participates in ATP binding.

Belongs to the BcsQ family.

The protein localises to the cytoplasm. Essential for cellulose biosynthesis, shown for strain 1094, a commensal, natural cellulose producer. Also shown in strain W3110 which has a restored reading frame (TAG stop codon to TTG for amino acid 6, called strain AR3110), this protein. May play a role in subcellular localization of an active cellulose biosynthesis apparatus at the bacterial cell pole. The combination of cellulose and the curli fiber network confer cohesion, elasticity and tissue-like properties to colonies. In Escherichia coli (strain K12), this protein is Cellulose biosynthesis protein BcsQ.